The chain runs to 115 residues: MANTILKSTTRHIRIFTARVENNDLIADTSQLTLDIDPDNEFLWEQSTIEKIQSRFKELVECHTGADLTDYTLRRIGTELEGTLFSLLQAGELSYNPNARVLNYSMGLPRTTELS.

The protein belongs to the complex I NdhM subunit family. As to quaternary structure, NDH-1 can be composed of about 15 different subunits; different subcomplexes with different compositions have been identified which probably have different functions.

It is found in the plastid. The protein resides in the organellar chromatophore thylakoid membrane. The catalysed reaction is a plastoquinone + NADH + (n+1) H(+)(in) = a plastoquinol + NAD(+) + n H(+)(out). It carries out the reaction a plastoquinone + NADPH + (n+1) H(+)(in) = a plastoquinol + NADP(+) + n H(+)(out). Functionally, NDH-1 shuttles electrons from an unknown electron donor, via FMN and iron-sulfur (Fe-S) centers, to quinones in the respiratory and/or the photosynthetic chain. The immediate electron acceptor for the enzyme in this species is believed to be plastoquinone. Couples the redox reaction to proton translocation, and thus conserves the redox energy in a proton gradient. The chain is NAD(P)H-quinone oxidoreductase subunit M, organellar chromatophore from Paulinella chromatophora.